A 764-amino-acid chain; its full sequence is uncharacterized protein (764 aa).

Residues 1-646 (MKEENGFAGF…LTKLYTFPFT (646 aa)) are Lumenal-facing. The tract at residues 22–173 (LNDTAPTKSQ…SAITAPSRKV (152 aa)) is disordered. Asn23 carries an N-linked (GlcNAc...) asparagine glycan. Polar residues-rich tracts occupy residues 25–41 (TAPTKSQSLKNGVNNEG) and 61–82 (SEASSHSTLGQQQARDGRQSPS). Phosphoserine is present on Ser80. Acidic residues predominate over residues 98–113 (ENQENEADEAENEETS). N-linked (GlcNAc...) asparagine glycosylation is present at Asn118. A compositionally biased stretch (basic and acidic residues) spans 118–145 (NHTENTEEIAEESRPLERTHSGSNHHEA). Polar residues predominate over residues 158-173 (NTLSQGSAITAPSRKV). Residues 197 to 264 (RDFHRIFKVL…TEIVSVEKKS (68 aa)) form the GRAM domain. Asn240 and Asn330 each carry an N-linked (GlcNAc...) asparagine glycan. The disordered stretch occupies residues 320-406 (ASGNHHSGSS…DGNSVKKMNE (87 aa)). The segment covering 321–330 (SGNHHSGSSN) has biased composition (low complexity). Positions 331–340 (QSINADSSAG) are enriched in polar residues. Over residues 352-371 (ANDESSEDDDEDNNTDEANE) the composition is skewed to acidic residues. Asn364 and Asn376 each carry an N-linked (GlcNAc...) asparagine glycan. Over residues 389–399 (HSDNVVLSDGN) the composition is skewed to polar residues. In terms of domain architecture, VASt spans 432 to 598 (LAHVLCSDVV…AFENYKVSPK (167 aa)). Residues Asn442 and Asn554 are each glycosylated (N-linked (GlcNAc...) asparagine). The segment covering 598–613 (KGRRKKITKHTKKKNK) has biased composition (basic residues). Positions 598 to 626 (KGRRKKITKHTKKKNKHASETSVAPEKVD) are disordered. An N-linked (GlcNAc...) asparagine glycan is attached at Asn627. A helical membrane pass occupies residues 647–667 (IITWLMHPTHLLLVVMFSMLV). Over 668 to 764 (LQWWYMQQIL…LRKLEASGYI (97 aa)) the chain is Cytoplasmic.

The protein belongs to the YSP2 family.

The protein localises to the membrane. This is an uncharacterized protein from Schizosaccharomyces pombe (strain 972 / ATCC 24843) (Fission yeast).